A 1323-amino-acid chain; its full sequence is Regulatory protein ADR1 (1323 aa).

Ser-54 is subject to Phosphoserine. C2H2-type zinc fingers lie at residues 104–126 and 132–155; these read FVCE…YRSH and YPCG…QKIH. Residues 175 to 216 are disordered; the sequence is KARKNSASSVKFQTPTYGTPDNGNFLNRTTANTRRKASPEAN. Residues 179-206 show a composition bias toward polar residues; sequence NSASSVKFQTPTYGTPDNGNFLNRTTAN. Phosphothreonine occurs at positions 188 and 193. The residue at position 230 (Ser-230) is a Phosphoserine; by PKA; in vitro. At Ser-258 the chain carries Phosphoserine. Position 259 is a phosphothreonine (Thr-259). Phosphoserine occurs at positions 299, 323, and 325. Phosphothreonine is present on Thr-327.

Phosphorylation at Ser-230 by cAMP-dependent protein kinase A does not affect DNA binding but appears to prevent transcription of ADH2 during glucose repression.

The protein resides in the nucleus. Functionally, required for transcriptional activation of glucose-repressible alcohol dehydrogenase (ADH2). The sequence is that of Regulatory protein ADR1 (ADR1) from Saccharomyces cerevisiae (strain ATCC 204508 / S288c) (Baker's yeast).